A 302-amino-acid chain; its full sequence is 4-hydroxy-tetrahydrodipicolinate synthase (302 aa).

T55 lines the pyruvate pocket. Catalysis depends on Y144, which acts as the Proton donor/acceptor. The active-site Schiff-base intermediate with substrate is K172. Pyruvate is bound at residue V214.

The protein belongs to the DapA family. In terms of assembly, homotetramer; dimer of dimers.

Its subcellular location is the cytoplasm. The catalysed reaction is L-aspartate 4-semialdehyde + pyruvate = (2S,4S)-4-hydroxy-2,3,4,5-tetrahydrodipicolinate + H2O + H(+). It participates in amino-acid biosynthesis; L-lysine biosynthesis via DAP pathway; (S)-tetrahydrodipicolinate from L-aspartate: step 3/4. Functionally, catalyzes the condensation of (S)-aspartate-beta-semialdehyde [(S)-ASA] and pyruvate to 4-hydroxy-tetrahydrodipicolinate (HTPA). The polypeptide is 4-hydroxy-tetrahydrodipicolinate synthase (Parasynechococcus marenigrum (strain WH8102)).